The primary structure comprises 91 residues: Hepcidin-1 (91 aa).

The first 24 residues, 1–24 (MKLSNVFLAAVVILTCVCVFQITA), serve as a signal peptide directing secretion. Positions 25-64 (VPFIQQVQDEHHVESEELQENQHLTEAEHRQTDPLVLFRT) are excised as a propeptide. 4 disulfide bridges follow: Cys73–Cys89, Cys76–Cys79, Cys77–Cys85, and Cys80–Cys88.

It belongs to the hepcidin family.

It localises to the secreted. In terms of biological role, seems to act as a signaling molecule involved in the maintenance of iron homeostasis. Seems to be required in conjunction with HFE to regulate both intestinal iron absorption and iron storage in macrophages. May also have antimicrobial activity. This Danio rerio (Zebrafish) protein is Hepcidin-1 (hamp1).